The following is an 83-amino-acid chain: CLAVATA3/ESR (CLE)-related protein 3 (83 aa).

A signal peptide spans 1-24; sequence MASLKLWVCLVLLLVLELTSVHEC. The stretch at 38-58 forms a coiled coil; sequence RLKKIRRELFERLKEMKGRSE. The segment at 53-83 is disordered; sequence MKGRSEGEETILGNTLDSKRLSPGGPDPRHH. A hydroxyproline mark is found at Pro75 and Pro78. Pro78 carries O-linked (Ara...) hydroxyproline glycosylation.

Belongs to the CLV3/ESR signal peptide family. In terms of processing, the O-glycosylation (arabinosylation) of the hydroxyproline Pro-78 enhances binding affinity of the CLE3p peptide for its receptor. Mostly expressed in roots, stems and apex, and, to a lower extent, in seedlings, leaves, flowers, siliques and pollen.

Its subcellular location is the secreted. It is found in the extracellular space. Extracellular signal peptide that regulates cell fate. The polypeptide is CLAVATA3/ESR (CLE)-related protein 3 (Arabidopsis thaliana (Mouse-ear cress)).